Reading from the N-terminus, the 467-residue chain is tRNA-2-methylthio-N(6)-dimethylallyladenosine synthase (467 aa).

A disordered region spans residues 1 to 20; it reads MSDDTTQIEPAMAQETSPRA. The 121-residue stretch at 23–143 folds into the MTTase N-terminal domain; that stretch reads RKVFVKTYGC…LPNALARVRG (121 aa). Positions 32, 68, 106, 184, 188, and 191 each coordinate [4Fe-4S] cluster. The Radical SAM core domain occupies 170-402; sequence RKRGVSAFLT…QALLSAQQYA (233 aa). Residues 405-467 enclose the TRAM domain; it reads DSMIGRKMDV…TNSLIAQKLA (63 aa).

Belongs to the methylthiotransferase family. MiaB subfamily. Monomer. [4Fe-4S] cluster is required as a cofactor.

It is found in the cytoplasm. It carries out the reaction N(6)-dimethylallyladenosine(37) in tRNA + (sulfur carrier)-SH + AH2 + 2 S-adenosyl-L-methionine = 2-methylsulfanyl-N(6)-dimethylallyladenosine(37) in tRNA + (sulfur carrier)-H + 5'-deoxyadenosine + L-methionine + A + S-adenosyl-L-homocysteine + 2 H(+). In terms of biological role, catalyzes the methylthiolation of N6-(dimethylallyl)adenosine (i(6)A), leading to the formation of 2-methylthio-N6-(dimethylallyl)adenosine (ms(2)i(6)A) at position 37 in tRNAs that read codons beginning with uridine. In Brucella canis (strain ATCC 23365 / NCTC 10854 / RM-666), this protein is tRNA-2-methylthio-N(6)-dimethylallyladenosine synthase.